Consider the following 328-residue polypeptide: Helicase VP6-A (328 aa).

Disordered stretches follow at residues 31 to 128 (DWTE…TGAN) and 180 to 237 (VAEQ…SVGI). Composition is skewed to basic and acidic residues over residues 36–61 (ETNKESKAERKEGDKAEELKDGEGRN), 71–83 (AKETKDARCDRRI), and 96–109 (PGERANENVDRGDG). K110 contributes to the ATP binding site. Gly residues predominate over residues 110-128 (KVGGGGGDADAGVGTTGAN). Basic and acidic residues-rich tracts occupy residues 180 to 205 (VAEQTERLRDLRRKEKSGAHAKAAER) and 214 to 230 (PHGDAQREGPEEEKTSE).

The protein belongs to the orbivirus VP6 family. As to quaternary structure, homohexamer.

Its subcellular location is the virion. It catalyses the reaction ATP + H2O = ADP + phosphate + H(+). In terms of biological role, ATP dependent RNA helicase essential for RNA packaging and viral transcription. Possesses ss- and dsRNA-binding capacity. In Bluetongue virus 1 (isolate South Africa) (BTV 1), this protein is Helicase VP6-A (Segment-9).